A 1032-amino-acid chain; its full sequence is Exportin-T (1032 aa).

It belongs to the exportin family.

Its subcellular location is the nucleus. The protein resides in the cytoplasm. TRNA nucleus export receptor which facilitates tRNA translocation across the nuclear pore complex. Involved in pre-tRNA splicing, probably by affecting the interaction of pre-tRNA with splicing endonuclease. The polypeptide is Exportin-T (los1) (Aspergillus fumigatus (strain CBS 144.89 / FGSC A1163 / CEA10) (Neosartorya fumigata)).